A 196-amino-acid chain; its full sequence is DnaA initiator-associating protein DiaA (196 aa).

The SIS domain maps to 34–196 (LVQSLLNGNK…DNTLFPHQDD (163 aa)).

This sequence belongs to the SIS family. DiaA subfamily. As to quaternary structure, homotetramer; dimer of dimers.

In terms of biological role, required for the timely initiation of chromosomal replication via direct interactions with the DnaA initiator protein. The sequence is that of DnaA initiator-associating protein DiaA from Shigella flexneri serotype 5b (strain 8401).